Reading from the N-terminus, the 229-residue chain is Lactate utilization protein C (229 aa).

Belongs to the LutC/YkgG family.

Its function is as follows. Is involved in L-lactate degradation and allows cells to grow with lactate as the sole carbon source. This is Lactate utilization protein C from Shouchella clausii (strain KSM-K16) (Alkalihalobacillus clausii).